The following is a 103-amino-acid chain: Histone H4 (103 aa).

The span at 1 to 14 shows a compositional bias: gly residues; it reads MSGRGKGGKGLGKG. The tract at residues 1–20 is disordered; it reads MSGRGKGGKGLGKGGAKRHR. Ser2 bears the N-acetylserine mark. Residue Lys17 is modified to N6-acetyllysine. Residues 17 to 21 mediate DNA binding; the sequence is KRHRK. Lys21 bears the N6-methyllysine mark.

The protein belongs to the histone H4 family. As to quaternary structure, the nucleosome is a histone octamer containing two molecules each of H2A, H2B, H3 and H4 assembled in one H3-H4 heterotetramer and two H2A-H2B heterodimers. The octamer wraps approximately 147 bp of DNA.

It is found in the nucleus. The protein localises to the chromosome. In terms of biological role, core component of nucleosome. Nucleosomes wrap and compact DNA into chromatin, limiting DNA accessibility to the cellular machineries which require DNA as a template. Histones thereby play a central role in transcription regulation, DNA repair, DNA replication and chromosomal stability. DNA accessibility is regulated via a complex set of post-translational modifications of histones, also called histone code, and nucleosome remodeling. The chain is Histone H4 from Capsicum annuum (Capsicum pepper).